We begin with the raw amino-acid sequence, 182 residues long: ATP synthase subunit b, chloroplastic (182 aa).

The chain crosses the membrane as a helical span at residues 29–47 (IINLALLIVLVINVAKDVL).

This sequence belongs to the ATPase B chain family. In terms of assembly, F-type ATPases have 2 components, F(1) - the catalytic core - and F(0) - the membrane proton channel. F(1) has five subunits: alpha(3), beta(3), gamma(1), delta(1), epsilon(1). F(0) has four main subunits: a(1), b(1), b'(1) and c(10-14). The alpha and beta chains form an alternating ring which encloses part of the gamma chain. F(1) is attached to F(0) by a central stalk formed by the gamma and epsilon chains, while a peripheral stalk is formed by the delta, b and b' chains.

Its subcellular location is the plastid. It is found in the chloroplast thylakoid membrane. F(1)F(0) ATP synthase produces ATP from ADP in the presence of a proton or sodium gradient. F-type ATPases consist of two structural domains, F(1) containing the extramembraneous catalytic core and F(0) containing the membrane proton channel, linked together by a central stalk and a peripheral stalk. During catalysis, ATP synthesis in the catalytic domain of F(1) is coupled via a rotary mechanism of the central stalk subunits to proton translocation. Its function is as follows. Component of the F(0) channel, it forms part of the peripheral stalk, linking F(1) to F(0). The chain is ATP synthase subunit b, chloroplastic from Heterosigma akashiwo (strain NIES-293 / 8280G21-1).